Here is a 449-residue protein sequence, read N- to C-terminus: Tubulin beta chain (449 aa).

Residues Q11, E69, S138, G142, T143, G144, N204, and N226 each contribute to the GTP site. Residue E69 participates in Mg(2+) binding.

Belongs to the tubulin family. In terms of assembly, dimer of alpha and beta chains. A typical microtubule is a hollow water-filled tube with an outer diameter of 25 nm and an inner diameter of 15 nM. Alpha-beta heterodimers associate head-to-tail to form protofilaments running lengthwise along the microtubule wall with the beta-tubulin subunit facing the microtubule plus end conferring a structural polarity. Microtubules usually have 13 protofilaments but different protofilament numbers can be found in some organisms and specialized cells. Mg(2+) serves as cofactor.

It is found in the cytoplasm. It localises to the cytoskeleton. In terms of biological role, tubulin is the major constituent of microtubules, a cylinder consisting of laterally associated linear protofilaments composed of alpha- and beta-tubulin heterodimers. Microtubules grow by the addition of GTP-tubulin dimers to the microtubule end, where a stabilizing cap forms. Below the cap, tubulin dimers are in GDP-bound state, owing to GTPase activity of alpha-tubulin. In Candida albicans (Yeast), this protein is Tubulin beta chain (TUB2).